The chain runs to 345 residues: Biotin synthase (345 aa).

The 219-residue stretch at 38-256 (GEVQVSTLLS…IAVARIMMPR (219 aa)) folds into the Radical SAM core domain. [4Fe-4S] cluster-binding residues include Cys53, Cys57, and Cys60. Positions 97, 128, 188, and 260 each coordinate [2Fe-2S] cluster.

Belongs to the radical SAM superfamily. Biotin synthase family. As to quaternary structure, homodimer. [4Fe-4S] cluster serves as cofactor. Requires [2Fe-2S] cluster as cofactor.

It carries out the reaction (4R,5S)-dethiobiotin + (sulfur carrier)-SH + 2 reduced [2Fe-2S]-[ferredoxin] + 2 S-adenosyl-L-methionine = (sulfur carrier)-H + biotin + 2 5'-deoxyadenosine + 2 L-methionine + 2 oxidized [2Fe-2S]-[ferredoxin]. Its pathway is cofactor biosynthesis; biotin biosynthesis; biotin from 7,8-diaminononanoate: step 2/2. Functionally, catalyzes the conversion of dethiobiotin (DTB) to biotin by the insertion of a sulfur atom into dethiobiotin via a radical-based mechanism. The sequence is that of Biotin synthase from Sodalis glossinidius (strain morsitans).